An 83-amino-acid chain; its full sequence is Major outer membrane lipoprotein (83 aa).

A signal peptide spans 1 to 19; sequence MNNVLKFSALALAAVLATG. Cys-20 carries N-palmitoyl cysteine lipidation. A lipid anchor (S-diacylglycerol cysteine) is attached at Cys-20.

The protein localises to the cell outer membrane. This is Major outer membrane lipoprotein (oprI) from Pseudomonas aeruginosa (strain ATCC 15692 / DSM 22644 / CIP 104116 / JCM 14847 / LMG 12228 / 1C / PRS 101 / PAO1).